A 343-amino-acid chain; its full sequence is Glucokinase (343 aa).

An ATP-binding site is contributed by 18 to 23; it reads GDIGGT.

The protein belongs to the bacterial glucokinase family.

The protein resides in the cytoplasm. It carries out the reaction D-glucose + ATP = D-glucose 6-phosphate + ADP + H(+). This chain is Glucokinase, found in Brucella melitensis biotype 1 (strain ATCC 23456 / CCUG 17765 / NCTC 10094 / 16M).